Reading from the N-terminus, the 331-residue chain is MNSFISMIRNGYSDTIPVWFMRQAGRYLKEYNEKKGRMTIKEICMDPELIAGISYDPVRILNVDAAIIFSDITIPLEALGYKIEFLPGGPRIINGYIKNHDMKDIIYFEESNFKYKIYDAIKIFKEKYHFPLIGFSGGLITVLSYIIAGGPDSNLNLTKRSMLSDDKFNDYINIIKDMIIKYIRLQVRAGVDAIQIFDSWLGYLSPQTYENYIKGHIEEILSEINVPVIYFSTGTSSIIEKLSRLNVDYISVDWRLDMKLARSMVNKKGLQGNLDPLIAAYNLRYALKETSDIINAAGRSSYIFNLGHGVIPETPVENLKHIVNFVHNFNQ.

Residues 22 to 26 (RQAGR), aspartate 71, tyrosine 145, serine 199, and histidine 308 contribute to the substrate site.

Belongs to the uroporphyrinogen decarboxylase family. As to quaternary structure, homodimer.

It localises to the cytoplasm. It catalyses the reaction uroporphyrinogen III + 4 H(+) = coproporphyrinogen III + 4 CO2. It functions in the pathway porphyrin-containing compound metabolism; protoporphyrin-IX biosynthesis; coproporphyrinogen-III from 5-aminolevulinate: step 4/4. Catalyzes the decarboxylation of four acetate groups of uroporphyrinogen-III to yield coproporphyrinogen-III. The polypeptide is Uroporphyrinogen decarboxylase (Picrophilus torridus (strain ATCC 700027 / DSM 9790 / JCM 10055 / NBRC 100828 / KAW 2/3)).